The following is a 637-amino-acid chain: 1-deoxy-D-xylulose-5-phosphate synthase (637 aa).

Thiamine diphosphate-binding positions include histidine 76 and 117 to 119; that span reads AHS. Mg(2+) is bound at residue aspartate 148. Thiamine diphosphate is bound by residues 149-150, asparagine 177, tyrosine 287, and glutamate 369; that span reads GA. Residue asparagine 177 coordinates Mg(2+).

Belongs to the transketolase family. DXPS subfamily. In terms of assembly, homodimer. It depends on Mg(2+) as a cofactor. The cofactor is thiamine diphosphate.

The catalysed reaction is D-glyceraldehyde 3-phosphate + pyruvate + H(+) = 1-deoxy-D-xylulose 5-phosphate + CO2. It participates in metabolic intermediate biosynthesis; 1-deoxy-D-xylulose 5-phosphate biosynthesis; 1-deoxy-D-xylulose 5-phosphate from D-glyceraldehyde 3-phosphate and pyruvate: step 1/1. Functionally, catalyzes the acyloin condensation reaction between C atoms 2 and 3 of pyruvate and glyceraldehyde 3-phosphate to yield 1-deoxy-D-xylulose-5-phosphate (DXP). The polypeptide is 1-deoxy-D-xylulose-5-phosphate synthase (Pelagibacter ubique (strain HTCC1062)).